The primary structure comprises 440 residues: MANGFSTSPRRPILHHSPRFNLGSSSRLFCESTPIFIGTIPLHCPKGTCPPAQSHGHSSLRTNLNSSPPRCPQNPGTEPSLQPLGKVLQCGLSRGLHETLKVLQTPREELPLQISSQLPTSPSRLQSVPTSQHKPAYREAILHPRLPDVFYAAPNLRFVRKLPKPSQSVRQPRRSSRKLNDRLVSKPRSVSVLNPQVDSPLHTRRALSRQLQSARQRPRLAENLCDPNSIPEPVRVRPGILGPSPFPSYREELSNTKSRFSEDKGSDFLPNPPSSNSSEPGLPGRPSQAPSCASENLRRPLHLHSSNPNSPHFRSRWIRKNSVKQARVQLGHISSLGQSPNLRPLDSLLQASRVLHATSVSSYKTQGASHEECFKTRSDGITSSHSGHLHHNDRVEHQLQQGPLLQCSQDSLAEPTYRPGTPSLPNFCIAAKELSSTQPS.

2 disordered regions span residues 49–81 and 162–295; these read CPPA…EPSL and LPKP…CASE. Polar residues predominate over residues 55–80; the sequence is HGHSSLRTNLNSSPPRCPQNPGTEPS. Basic and acidic residues predominate over residues 249 to 266; the sequence is YREELSNTKSRFSEDKGS. Residues 274 to 284 show a composition bias toward low complexity; the sequence is SSNSSEPGLPG.

This sequence belongs to the tymoviridae protein p69 family.

This is an uncharacterized protein from Erysimum latent virus (ELV).